An 843-amino-acid polypeptide reads, in one-letter code: Toll-like receptor 4 (843 aa).

A signal peptide spans 1 to 23 (MMPPTRLAGTLIPAMAFLSCLRP). Positions 24 to 54 (ESWDPCVQVVPNTTYQCMDLNLYKIPENIPT) constitute an LRRNT domain. Residues 24-633 (ESWDPCVQVV…FNNATCQISK (610 aa)) are Extracellular-facing. An intrachain disulfide couples cysteine 29 to cysteine 40. A glycan (N-linked (GlcNAc...) asparagine) is linked at asparagine 35. 8 LRR repeats span residues 55-76 (STKE…SFSN), 79-100 (ELQV…AYQG), 103-124 (HLST…AFSG), 127-148 (SLQT…PIGH), 151-172 (TLKE…EYFS), 176-197 (NLEH…DLRV), 205-225 (NLSL…AFKE), and 227-247 (KLHK…KSCI). Asparagine 189 and asparagine 205 each carry an N-linked (GlcNAc...) asparagine glycan. 2 N-linked (GlcNAc...) asparagine glycosylation sites follow: asparagine 282 and asparagine 295. 9 LRR repeats span residues 353–374 (SLKR…VKLP), 375–398 (SLEF…ADLK), 401–423 (RLKH…MGLE), 424–445 (QLEH…PVFL), 449–459 (NLRYLDISYTN), 473–496 (SLQV…FREM), 498–519 (NLTT…AFCL), 522–543 (RLRV…PYKP), and 546–569 (SLQI…QHFP). A disulfide bridge connects residues cysteine 391 and cysteine 392. Residues asparagine 498 and asparagine 527 are each glycosylated (N-linked (GlcNAc...) asparagine). A glycan (N-linked (GlcNAc...) asparagine) is linked at asparagine 576. The LRRCT domain maps to 580–631 (NDFACVCEYQSFLQWVKDQRQLLVEVEHLVCAIPLQMRGMPVLGFNNATCQI). 2 disulfide bridges follow: cysteine 584–cysteine 610 and cysteine 586–cysteine 629. A glycan (N-linked (GlcNAc...) asparagine) is linked at asparagine 626. The chain crosses the membrane as a helical span at residues 634–654 (TIVGGSVFSILMVSVIAVLVY). Residues 655-843 (KFYFHLMLLA…SRQHDAETST (189 aa)) are Cytoplasmic-facing. The TIR domain maps to 674-817 (SIYDAFVIYS…IFWRRLRKAL (144 aa)). A disordered region spans residues 824 to 843 (SPAGTADAAESRQHDAETST). Basic and acidic residues predominate over residues 832-843 (AESRQHDAETST).

This sequence belongs to the Toll-like receptor family. As to quaternary structure, belongs to the lipopolysaccharide (LPS) receptor, a multi-protein complex containing at least CD14, LY96 and TLR4. Binding to bacterial LPS leads to homodimerization. Interacts with LY96 via the extracellular domain. Interacts with MYD88 and TIRAP via their respective TIR domains. Interacts with NOX4. Interacts with CNPY3 and HSP90B1; this interaction is required for proper folding in the endoplasmic reticulum. Interacts with MAP3K21; this interaction leads to negative regulation of TLR4 signaling. Interacts with CD36, following CD36 stimulation by oxLDL or amyloid-beta 42, and forms a heterodimer with TLR6. The trimeric complex is internalized and triggers inflammatory response. LYN kinase activity facilitates TLR4-TLR6 heterodimerization and signal initiation. Interacts with TICAM1 in response to LPS in a WDFY1-dependent manner. Interacts with WDFY1 in response to LPS. Interacts with SMPDL3B. Interacts with CEACAM1; upon lipopolysaccharide stimulation, forms a complex including TLR4 and the phosphorylated form of SYK and CEACAM1, which in turn, recruits PTPN6 that dephosphorylates SYK, reducing the production of reactive oxygen species (ROS) and lysosome disruption, which in turn, reduces the activity of the inflammasome. Interacts with RFTN1; the interaction occurs in response to lipopolysaccharide stimulation. Interacts with SCIMP; the interaction occurs in response to lipopolysaccharide stimulation and is enhanced by phosphorylation of SCIMP by LYN. This interaction facilitates the phosphorylation of TLR4 by LYN which elicits a selective cytokine response in macrophages. Interacts with TRAF3IP3. Interacts with TREM1; this interaction enhances TLR4-mediated inflammatory response. Interacts with ZG16B/PAUF. Interacts with CD82; this interaction inhibits TLR4-mediated signaling pathway. Post-translationally, phosphorylated on tyrosine residues by LYN after binding lipopolysaccharide. In terms of processing, ubiquitinated by RNF128 via 'Lys-28'-linked polyubiquitin chains, leading to proteasomal degradation.

Its subcellular location is the cell membrane. The protein localises to the early endosome. It is found in the cell projection. It localises to the ruffle. Functionally, transmembrane receptor that functions as a pattern recognition receptor recognizing pathogen- and damage-associated molecular patterns (PAMPs and DAMPs) to induce innate immune responses via downstream signaling pathways. At the plasma membrane, cooperates with LY96 to mediate the innate immune response to bacterial lipopolysaccharide (LPS). Also involved in LPS-independent inflammatory responses triggered by free fatty acids, such as palmitate, and Ni(2+). Mechanistically, acts via MYD88, TIRAP and TRAF6, leading to NF-kappa-B activation, cytokine secretion and the inflammatory response. Alternatively, CD14-mediated TLR4 internalization via endocytosis is associated with the initiation of a MYD88-independent signaling via the TICAM1-TBK1-IRF3 axis leading to type I interferon production. In addition to the secretion of proinflammatory cytokines, initiates the activation of NLRP3 inflammasome and formation of a positive feedback loop between autophagy and NF-kappa-B signaling cascade. In complex with TLR6, promotes inflammation in monocytes/macrophages by associating with TLR6 and the receptor CD86. Upon ligand binding, such as oxLDL or amyloid-beta 42, the TLR4:TLR6 complex is internalized and triggers inflammatory response, leading to NF-kappa-B-dependent production of CXCL1, CXCL2 and CCL9 cytokines, via MYD88 signaling pathway, and CCL5 cytokine, via TICAM1 signaling pathway. In myeloid dendritic cells, vesicular stomatitis virus glycoprotein G but not LPS promotes the activation of IRF7, leading to type I IFN production in a CD14-dependent manner. The polypeptide is Toll-like receptor 4 (TLR4) (Equus caballus (Horse)).